A 510-amino-acid chain; its full sequence is Putative cytochrome P450 cyp-13B1 (510 aa).

C456 contributes to the heme binding site.

It belongs to the cytochrome P450 family. Heme serves as cofactor.

In terms of biological role, cytochromes P450 are a group of heme-thiolate monooxygenases. They oxidize a variety of structurally unrelated compounds, including steroids, fatty acids, and xenobiotics. May play a role in the regulation of lifespan. This is Putative cytochrome P450 cyp-13B1 from Caenorhabditis elegans.